The following is an 838-amino-acid chain: Axin-2 (838 aa).

Residues 1–75 (MSSAVLVTLL…EGRASPDSPL (75 aa)) form a disordered region. Positions 21-30 (APRPPVPGEE) match the Tankyrase-binding motif motif. Polar residues predominate over residues 42 to 55 (KVQSTKPMPVSSNA). Residues 56-69 (RRNEDGLGEPEGRA) show a composition bias toward basic and acidic residues. The region spanning 81–200 (SLHSLLGDQD…LTSDIYLEYV (120 aa)) is the RGS domain. Disordered regions lie at residues 300 to 333 (SELSSDALTDDSMSMTDSSVDGIPPYRMGSKKQL), 398 to 435 (IREDEEKEGSEQALSSRDGAPVQHPLALLPSGSYEEDP), 450 to 483 (PGCQSPGVGRYSPRSRSPDHHHHHHQQCHALLPT), 568 to 682 (GSRG…AMPP), and 712 to 744 (VASQQRDRNHPATGQAGPTSFSNPSLASEDHKE). The segment covering 303-318 (SSDALTDDSMSMTDSS) has biased composition (low complexity). The tract at residues 327–413 (MGSKKQLQRE…KEGSEQALSS (87 aa)) is interaction with GSK3B. Residues 413–476 (SRDGAPVQHP…PDHHHHHHQQ (64 aa)) are interaction with beta-catenin. The segment covering 727–737 (AGPTSFSNPSL) has biased composition (polar residues). One can recognise a DIX domain in the interval 756-838 (ASELIVTYFF…RILGKVERID (83 aa)).

Interacts with SMAD7 and RNF111. Interacts with ANKRD6. Interacts with glycogen synthase kinase-3 beta (GSK3B) and beta-catenin. The interaction between axin and beta-catenin occurs via the armadillo repeats contained in beta-catenin. Interacts with SIAH1. Interacts with SIAH2. Post-translationally, ADP-ribosylated by tankyrase TNKS and TNKS2. Poly-ADP-ribosylated protein is recognized by RNF146, followed by ubiquitination and subsequent activation of the Wnt signaling pathway. Ubiquitinated by RNF146 when poly-ADP-ribosylated, leading to its degradation and subsequent activation of the Wnt signaling pathway. Deubiquitinated by USP34, deubiquitinated downstream of beta-catenin stabilization step: deubiquitination is important Wnt signaling to positively regulate beta-catenin (CTNBB1)-mediated transcription. In terms of processing, probably phosphorylated by GSK3B and dephosphorylated by PP2A. Expressed in lung and thymus.

The protein resides in the cytoplasm. Its function is as follows. Inhibitor of the Wnt signaling pathway. Down-regulates beta-catenin. Probably facilitate the phosphorylation of beta-catenin and APC by GSK3B. The chain is Axin-2 (Axin2) from Rattus norvegicus (Rat).